Here is a 179-residue protein sequence, read N- to C-terminus: Large ribosomal subunit protein uL5 (179 aa).

This sequence belongs to the universal ribosomal protein uL5 family. In terms of assembly, part of the 50S ribosomal subunit; part of the 5S rRNA/L5/L18/L25 subcomplex. Contacts the 5S rRNA and the P site tRNA. Forms a bridge to the 30S subunit in the 70S ribosome.

This is one of the proteins that bind and probably mediate the attachment of the 5S RNA into the large ribosomal subunit, where it forms part of the central protuberance. In the 70S ribosome it contacts protein S13 of the 30S subunit (bridge B1b), connecting the 2 subunits; this bridge is implicated in subunit movement. Contacts the P site tRNA; the 5S rRNA and some of its associated proteins might help stabilize positioning of ribosome-bound tRNAs. This chain is Large ribosomal subunit protein uL5, found in Bacillus velezensis (strain DSM 23117 / BGSC 10A6 / LMG 26770 / FZB42) (Bacillus amyloliquefaciens subsp. plantarum).